Reading from the N-terminus, the 304-residue chain is Recombination-associated protein RdgC (304 aa).

The protein belongs to the RdgC family.

It localises to the cytoplasm. Its subcellular location is the nucleoid. In terms of biological role, may be involved in recombination. This Shewanella sp. (strain MR-4) protein is Recombination-associated protein RdgC.